Reading from the N-terminus, the 196-residue chain is MAAAKDGCGLETAAGNGRRLHLGIPEAVFVEDVDSFMKQPGNETADTVLKKLDEQYQKYKFMELNLAQKKRRLKGQIPEIKQTLEILKYMQKKKESTNSMETRFLLADNLYCKASVPPTDKVCLWLGANVMLEYDIDEAQALLEKNLSTATKNLDSLEEDLDFLRDQFTTTEVNMARVYNWDVKRRNKDDSTKNKA.

At Ala-2 the chain carries N-acetylalanine. Lys-58 is subject to N6-acetyllysine.

This sequence belongs to the prefoldin subunit alpha family. In terms of assembly, heterohexamer of two PFD-alpha type and four PFD-beta type subunits. Binds to the C-terminal part of VHL.

It localises to the cytoplasm. The protein localises to the nucleus. Binds specifically to cytosolic chaperonin (c-CPN) and transfers target proteins to it. Binds to nascent polypeptide chain and promotes folding in an environment in which there are many competing pathways for nonnative proteins. This Mus musculus (Mouse) protein is Prefoldin subunit 3 (Vbp1).